A 190-amino-acid chain; its full sequence is GTP cyclohydrolase 1 (190 aa).

Zn(2+)-binding residues include cysteine 75, histidine 78, and cysteine 146.

Belongs to the GTP cyclohydrolase I family. Homomer.

The enzyme catalyses GTP + H2O = 7,8-dihydroneopterin 3'-triphosphate + formate + H(+). The protein operates within cofactor biosynthesis; 7,8-dihydroneopterin triphosphate biosynthesis; 7,8-dihydroneopterin triphosphate from GTP: step 1/1. This chain is GTP cyclohydrolase 1, found in Campylobacter lari (strain RM2100 / D67 / ATCC BAA-1060).